The sequence spans 292 residues: Ubiquinone biosynthesis protein UbiV (292 aa).

C39, C180, C193, and C197 together coordinate [4Fe-4S] cluster.

This sequence belongs to the peptidase U32 family. UbiV subfamily. As to quaternary structure, forms a heterodimer with UbiU. It depends on [4Fe-4S] cluster as a cofactor.

It participates in cofactor biosynthesis; ubiquinone biosynthesis. Its function is as follows. Required for O(2)-independent ubiquinone (coenzyme Q) biosynthesis. Together with UbiU, is essential for the C6-hydroxylation reaction in the oxygen-independent ubiquinone biosynthesis pathway. The sequence is that of Ubiquinone biosynthesis protein UbiV from Escherichia coli (strain K12).